The sequence spans 208 residues: Large ribosomal subunit protein uL3 (208 aa).

The interval 123 to 147 (RHGQSRGPMAHGSRYHRRPGSMGPV) is disordered.

It belongs to the universal ribosomal protein uL3 family. As to quaternary structure, part of the 50S ribosomal subunit. Forms a cluster with proteins L14 and L19.

Its function is as follows. One of the primary rRNA binding proteins, it binds directly near the 3'-end of the 23S rRNA, where it nucleates assembly of the 50S subunit. The polypeptide is Large ribosomal subunit protein uL3 (Streptococcus uberis (strain ATCC BAA-854 / 0140J)).